The following is an 80-amino-acid chain: RNA-binding protein Hfq (80 aa).

The 61-residue stretch at 10–70 (DAFLNQVRKE…ISTISPLRPV (61 aa)) folds into the Sm domain.

The protein belongs to the Hfq family. In terms of assembly, homohexamer.

Its function is as follows. RNA chaperone that binds small regulatory RNA (sRNAs) and mRNAs to facilitate mRNA translational regulation in response to envelope stress, environmental stress and changes in metabolite concentrations. Also binds with high specificity to tRNAs. The polypeptide is RNA-binding protein Hfq (Desulforamulus reducens (strain ATCC BAA-1160 / DSM 100696 / MI-1) (Desulfotomaculum reducens)).